We begin with the raw amino-acid sequence, 139 residues long: MSIFPAQPSDKKAVEEGAAFMPRFDASGLITAIVTDARDGELLMVAHMNEEALRLTLETGIAHYWSRSRKTLWKKGETSGNLQSVVELRTDCDQDALWLKVHVAGDGPTCHTGRRSCFYRQVVSSGGKVALTMVSDHDQ.

Mg(2+) is bound at residue Asp-91. Cys-92 provides a ligand contact to Zn(2+). Mg(2+) is bound by residues Asp-93 and Asp-95. Positions 110 and 117 each coordinate Zn(2+).

This sequence belongs to the PRA-CH family. In terms of assembly, homodimer. Requires Mg(2+) as cofactor. Zn(2+) is required as a cofactor.

The protein localises to the cytoplasm. The catalysed reaction is 1-(5-phospho-beta-D-ribosyl)-5'-AMP + H2O = 1-(5-phospho-beta-D-ribosyl)-5-[(5-phospho-beta-D-ribosylamino)methylideneamino]imidazole-4-carboxamide. The protein operates within amino-acid biosynthesis; L-histidine biosynthesis; L-histidine from 5-phospho-alpha-D-ribose 1-diphosphate: step 3/9. In terms of biological role, catalyzes the hydrolysis of the adenine ring of phosphoribosyl-AMP. This chain is Phosphoribosyl-AMP cyclohydrolase, found in Brucella canis (strain ATCC 23365 / NCTC 10854 / RM-666).